Consider the following 495-residue polypeptide: Glutamyl-tRNA(Gln) amidotransferase subunit A (495 aa).

Catalysis depends on charge relay system residues lysine 78 and serine 158. The active-site Acyl-ester intermediate is the serine 182.

It belongs to the amidase family. GatA subfamily. In terms of assembly, heterotrimer of A, B and C subunits.

The enzyme catalyses L-glutamyl-tRNA(Gln) + L-glutamine + ATP + H2O = L-glutaminyl-tRNA(Gln) + L-glutamate + ADP + phosphate + H(+). Allows the formation of correctly charged Gln-tRNA(Gln) through the transamidation of misacylated Glu-tRNA(Gln) in organisms which lack glutaminyl-tRNA synthetase. The reaction takes place in the presence of glutamine and ATP through an activated gamma-phospho-Glu-tRNA(Gln). The protein is Glutamyl-tRNA(Gln) amidotransferase subunit A of Ruegeria sp. (strain TM1040) (Silicibacter sp.).